The sequence spans 217 residues: NADPH-dependent 3-demethoxyubiquinone 3-hydroxylase, mitochondrial (217 aa).

2 tandem repeats follow at residues 48–129 (AVDQ…TALL) and 130–217 (GKEG…SERF). The 2 X approximate tandem repeats stretch occupies residues 48–217 (AVDQIIRVDH…SAAIYLSERF (170 aa)). The Fe cation site is built by E60, E90, H93, E142, E178, and H181. NADH contacts are provided by Y212 and R216.

Belongs to the COQ7 family. As to quaternary structure, component of a multi-subunit COQ enzyme complex. Interacts with COQ8B and COQ6. Interacts with COQ9. The cofactor is Fe cation.

The protein localises to the mitochondrion inner membrane. The catalysed reaction is a 5-methoxy-2-methyl-3-(all-trans-polyprenyl)benzoquinone + NADH + O2 = a 3-demethylubiquinone + NAD(+) + H2O. Its pathway is cofactor biosynthesis; ubiquinone biosynthesis. Its function is as follows. Catalyzes the hydroxylation of the 5-methoxy-2-methyl-3-(all-trans-polyprenyl)benzoquinone at the C6 position and participates in the biosynthesis of ubiquinone. Catalyzes the reaction through a substrate-mediated reduction pathway, whereby NADH shuttles electrons to 5-methoxy-2-methyl-3-(all-trans-decaprenyl)benzoquinone, which then transfers the electrons to the two Fe(3+) centers. The binding of 5-methoxy-2-methyl-3-(all-trans-polyprenyl)benzoquinone (DMQn) mediates reduction of the diiron center by nicotinamide adenine dinucleotide (NADH) and initiates oxygen activation for subsequent DMQ hydroxylation. The physiological substrates are 5-methoxy-2-methyl-3-(all-trans-nonaprenyl)benzoquinone (DMQ(9)) and 5-methoxy-2-methyl-3-(all-trans-decaprenyl)benzoquinone (DMQ(10)), however in vitro the enzyme does not have any specificity concerning the length of the polyprenyl tail, and accepts tails of various lengths with similar efficiency. Also has a structural role in the COQ enzyme complex, stabilizing other COQ polypeptides. Involved in lifespan determination in a ubiquinone-independent manner. Plays a role in modulating mitochondrial stress responses, acting in the nucleus, perhaps via regulating gene expression, independent of its characterized mitochondrial function in ubiquinone biosynthesis. This Rattus norvegicus (Rat) protein is NADPH-dependent 3-demethoxyubiquinone 3-hydroxylase, mitochondrial.